Consider the following 210-residue polypeptide: Large ribosomal subunit protein uL3 (210 aa).

The tract at residues 125–154 (RHGFRGGPKTHGQSDRHRAPGSIGAGTTPG) is disordered.

This sequence belongs to the universal ribosomal protein uL3 family. Part of the 50S ribosomal subunit. Forms a cluster with proteins L14 and L19.

One of the primary rRNA binding proteins, it binds directly near the 3'-end of the 23S rRNA, where it nucleates assembly of the 50S subunit. The sequence is that of Large ribosomal subunit protein uL3 from Chloroflexus aggregans (strain MD-66 / DSM 9485).